The primary structure comprises 675 residues: DNA ligase (675 aa).

NAD(+) contacts are provided by residues 32-36 (DAEYD), 81-82 (SL), and E113. Residue K115 is the N6-AMP-lysine intermediate of the active site. Residues R136, E173, K291, and K315 each contribute to the NAD(+) site. The Zn(2+) site is built by C409, C412, C427, and C433. Positions 595–675 (SEKTYFFNKK…ELNSLIRIKE (81 aa)) constitute a BRCT domain.

It belongs to the NAD-dependent DNA ligase family. LigA subfamily. The cofactor is Mg(2+). Mn(2+) is required as a cofactor.

It carries out the reaction NAD(+) + (deoxyribonucleotide)n-3'-hydroxyl + 5'-phospho-(deoxyribonucleotide)m = (deoxyribonucleotide)n+m + AMP + beta-nicotinamide D-nucleotide.. DNA ligase that catalyzes the formation of phosphodiester linkages between 5'-phosphoryl and 3'-hydroxyl groups in double-stranded DNA using NAD as a coenzyme and as the energy source for the reaction. It is essential for DNA replication and repair of damaged DNA. This Buchnera aphidicola subsp. Acyrthosiphon pisum (strain APS) (Acyrthosiphon pisum symbiotic bacterium) protein is DNA ligase.